Consider the following 462-residue polypeptide: Spermatogenesis- and oogenesis-specific basic helix-loop-helix-containing protein 2 (462 aa).

Residues 200-251 form the bHLH domain; that stretch reads KASFLHSSKEKLRRERIKFCCEQLRTLLPYVKGRKSDVASVIEATVDYVKQV. The tract at residues 422–462 is disordered; the sequence is PASSRTASSSIFRGFRESDSGHQASQQPTGPSLQPQDSSYF. Residues 442–462 show a composition bias toward polar residues; the sequence is GHQASQQPTGPSLQPQDSSYF.

It localises to the nucleus. Functionally, probable transcription factor, which may be involved in spermatogenesis and oogenesis. The sequence is that of Spermatogenesis- and oogenesis-specific basic helix-loop-helix-containing protein 2 (Sohlh2) from Rattus norvegicus (Rat).